The primary structure comprises 240 residues: Nuclear receptor-interacting protein 3 (240 aa).

In Pongo abelii (Sumatran orangutan), this protein is Nuclear receptor-interacting protein 3 (NRIP3).